Here is a 158-residue protein sequence, read N- to C-terminus: Low molecular weight phosphotyrosine protein phosphatase (158 aa).

An N-acetylalanine modification is found at alanine 2. The active-site Nucleophile is cysteine 13. Residue arginine 19 is part of the active site. Aspartate 130 acts as the Proton donor in catalysis. 2 positions are modified to phosphotyrosine: tyrosine 132 and tyrosine 133.

This sequence belongs to the low molecular weight phosphotyrosine protein phosphatase family. As to quaternary structure, interacts with EPHA2; dephosphorylates EPHA2. Interacts with EPHB1. Interacts with the SH3 domain of SPTAN1. In terms of processing, phosphorylated by LCK. Phosphorylation at Tyr-132 increases its phosphatase activity.

Its subcellular location is the cytoplasm. It catalyses the reaction O-phospho-L-tyrosyl-[protein] + H2O = L-tyrosyl-[protein] + phosphate. The enzyme catalyses a phosphate monoester + H2O = an alcohol + phosphate. With respect to regulation, inhibited by sulfhydryl reagents. Acts on tyrosine phosphorylated proteins, low-MW aryl phosphates and natural and synthetic acyl phosphates with differences in substrate specificity between isoform 1 and isoform 2. This is Low molecular weight phosphotyrosine protein phosphatase (ACP1) from Pongo abelii (Sumatran orangutan).